Reading from the N-terminus, the 308-residue chain is Cytochrome b (308 aa).

A run of 4 helical transmembrane segments spans residues 1 to 21 (FGSLLGICLMTQIITGLLLAM), 45 to 66 (WLIRNLHANGASFFFICIYLHI), 81 to 101 (WNIGVILLLTLMATAFVGYVL), and 146 to 166 (FFALHFLLHFIIAGLTFIHLT). Positions 51 and 65 each coordinate heme b. Heme b is bound by residues histidine 150 and histidine 164. Histidine 169 is a binding site for a ubiquinone. Helical transmembrane passes span 194–214 (TKDALGFILLLFPLMTLAMFS), 256–276 (LGGVLALAASVLILLLIPLLH), and 288–308 (LSQFLFWTLVMNLLILTWIGS).

This sequence belongs to the cytochrome b family. In terms of assembly, the cytochrome bc1 complex contains 11 subunits: 3 respiratory subunits (MT-CYB, CYC1 and UQCRFS1), 2 core proteins (UQCRC1 and UQCRC2) and 6 low-molecular weight proteins (UQCRH/QCR6, UQCRB/QCR7, UQCRQ/QCR8, UQCR10/QCR9, UQCR11/QCR10 and a cleavage product of UQCRFS1). This cytochrome bc1 complex then forms a dimer. Heme b serves as cofactor.

It is found in the mitochondrion inner membrane. Functionally, component of the ubiquinol-cytochrome c reductase complex (complex III or cytochrome b-c1 complex) that is part of the mitochondrial respiratory chain. The b-c1 complex mediates electron transfer from ubiquinol to cytochrome c. Contributes to the generation of a proton gradient across the mitochondrial membrane that is then used for ATP synthesis. This Zaratornis stresemanni (White-cheeked cotinga) protein is Cytochrome b (MT-CYB).